A 288-amino-acid chain; its full sequence is 4-hydroxy-3-methylbut-2-enyl diphosphate reductase (288 aa).

C13 contacts [4Fe-4S] cluster. 2 residues coordinate (2E)-4-hydroxy-3-methylbut-2-enyl diphosphate: H41 and H75. Dimethylallyl diphosphate is bound by residues H41 and H75. Positions 41 and 75 each coordinate isopentenyl diphosphate. C97 serves as a coordination point for [4Fe-4S] cluster. H130 lines the (2E)-4-hydroxy-3-methylbut-2-enyl diphosphate pocket. Dimethylallyl diphosphate is bound at residue H130. Residue H130 participates in isopentenyl diphosphate binding. Residue E132 is the Proton donor of the active site. A (2E)-4-hydroxy-3-methylbut-2-enyl diphosphate-binding site is contributed by T168. C199 lines the [4Fe-4S] cluster pocket. Residues S227, S228, N229, and S271 each coordinate (2E)-4-hydroxy-3-methylbut-2-enyl diphosphate. Residues S227, S228, N229, and S271 each coordinate dimethylallyl diphosphate. Residues S227, S228, N229, and S271 each coordinate isopentenyl diphosphate.

This sequence belongs to the IspH family. It depends on [4Fe-4S] cluster as a cofactor.

The catalysed reaction is isopentenyl diphosphate + 2 oxidized [2Fe-2S]-[ferredoxin] + H2O = (2E)-4-hydroxy-3-methylbut-2-enyl diphosphate + 2 reduced [2Fe-2S]-[ferredoxin] + 2 H(+). The enzyme catalyses dimethylallyl diphosphate + 2 oxidized [2Fe-2S]-[ferredoxin] + H2O = (2E)-4-hydroxy-3-methylbut-2-enyl diphosphate + 2 reduced [2Fe-2S]-[ferredoxin] + 2 H(+). It participates in isoprenoid biosynthesis; dimethylallyl diphosphate biosynthesis; dimethylallyl diphosphate from (2E)-4-hydroxy-3-methylbutenyl diphosphate: step 1/1. It functions in the pathway isoprenoid biosynthesis; isopentenyl diphosphate biosynthesis via DXP pathway; isopentenyl diphosphate from 1-deoxy-D-xylulose 5-phosphate: step 6/6. Catalyzes the conversion of 1-hydroxy-2-methyl-2-(E)-butenyl 4-diphosphate (HMBPP) into a mixture of isopentenyl diphosphate (IPP) and dimethylallyl diphosphate (DMAPP). Acts in the terminal step of the DOXP/MEP pathway for isoprenoid precursor biosynthesis. This Phocaeicola vulgatus (strain ATCC 8482 / DSM 1447 / JCM 5826 / CCUG 4940 / NBRC 14291 / NCTC 11154) (Bacteroides vulgatus) protein is 4-hydroxy-3-methylbut-2-enyl diphosphate reductase.